The primary structure comprises 623 residues: GATA zinc finger domain-containing protein 6 (623 aa).

Disordered regions lie at residues 137–156 (IISP…GNNF), 167–197 (INNN…TAST), and 245–289 (PTTT…TAST). A compositionally biased stretch (low complexity) spans 167 to 179 (INNNSNNNNNNNN). The span at 185–197 (KQQTSKGSATAST) shows a compositional bias: polar residues. A GATA-type zinc finger spans residues 320–345 (CHSCGETQTSQWRRGPDGCKSLCNAC). Positions 398–509 (IQQQQQKDDH…SINHNDKLIN (112 aa)) are disordered. Low complexity predominate over residues 410-482 (LSRPSSFSSQ…TSPTISSESL (73 aa)). The span at 483–502 (NFSSATNTPTNLSPNLQSIN) shows a compositional bias: polar residues.

This is GATA zinc finger domain-containing protein 6 (gtaF) from Dictyostelium discoideum (Social amoeba).